Reading from the N-terminus, the 136-residue chain is SPbeta prophage-derived uncharacterized protein YonI (136 aa).

The sequence is that of SPbeta prophage-derived uncharacterized protein YonI (yonI) from Bacillus subtilis (strain 168).